A 624-amino-acid chain; its full sequence is Alpha-mannosidase I MNS4 (624 aa).

At 1 to 7 (MDSNFKW) the chain is on the cytoplasmic side. A helical; Signal-anchor for type II membrane protein transmembrane segment spans residues 8–28 (LLFAILISLTFSGFVLHHGVL). Residues 29–624 (AESVKPDEAK…ETDDQRSYSS (596 aa)) are Lumenal-facing. Asn-115 carries an N-linked (GlcNAc...) asparagine glycan. Glu-122 (proton donor) is an active-site residue. Residue Asp-262 is part of the active site. Catalysis depends on Glu-355, which acts as the Proton donor. Glu-376 is a catalytic residue. Thr-466 is a binding site for Ca(2+). Residue Asn-494 is glycosylated (N-linked (GlcNAc...) asparagine). The disordered stretch occupies residues 574-624 (QTVEKRPQEEEGFTSQSEPIMTISGGSSNDQTGQELTLLESETDDQRSYSS). Over residues 586 to 608 (FTSQSEPIMTISGGSSNDQTGQE) the composition is skewed to polar residues.

Belongs to the glycosyl hydrolase 47 family. It depends on Ca(2+) as a cofactor.

It localises to the endoplasmic reticulum membrane. It functions in the pathway protein modification; protein glycosylation. Its function is as follows. Can convert Man(9)GlcNAc(2) and Man(8)GlcNAc(2) into N-glycans with a terminal alpha-1,6-linked Man residue in the C-branch. Functions in the formation of unique N-glycan structures that are specifically recognized by components of the endoplasmic reticulum-associated degradation (ERAD) machinery, which leads to the degradation of misfolded glycoproteins. Most likely generates N-glycan signal on misfolded glycoproteins that is subsequently recognized by OS9. Required for ERAD of the heavily glycosylated and misfolded BRI1 variants BRI1-5 and BRI1-9. Does not seem to play role in N-glycan processing of correctly folded proteins destined for secretion. The protein is Alpha-mannosidase I MNS4 (MNS4) of Arabidopsis thaliana (Mouse-ear cress).